A 930-amino-acid chain; its full sequence is Translation initiation factor IF-2 (930 aa).

Positions 50-67 are enriched in low complexity; it reads FKPAAAPKVEAKPAAPKV. Disordered stretches follow at residues 50–217 and 260–346; these read FKPA…SSEE and EVVP…HELP. Basic and acidic residues-rich tracts occupy residues 68-90 and 110-125; these read SAEKKAEKSEPAKPAVAKEEAKP and FKAEREARAKEQAERR. The segment covering 129–141 has biased composition (low complexity); the sequence is KGNNRDQQQNGNR. Basic and acidic residues-rich tracts occupy residues 157–167 and 262–295; these read RDNRRFNDQAK and VPEKKEPAVDTRRKKQARPDKNRDDYDHEEDGPR. Positions 309–318 are enriched in low complexity; the sequence is NQKNSNWNNN. Residues 337–346 are compositionally biased toward basic and acidic residues; that stretch reads VTERKFHELP. The tr-type G domain maps to 432 to 599; the sequence is ERPPVVTIMG…TVLLVAEIQE (168 aa). The segment at 441–448 is G1; that stretch reads GHVDHGKT. Position 441 to 448 (441 to 448) interacts with GTP; it reads GHVDHGKT. The segment at 466 to 470 is G2; sequence GITQH. Positions 487 to 490 are G3; it reads DTPG. GTP-binding positions include 487–491 and 541–544; these read DTPGH and NKID. Positions 541–544 are G4; sequence NKID. The segment at 577 to 579 is G5; it reads SAK.

It belongs to the TRAFAC class translation factor GTPase superfamily. Classic translation factor GTPase family. IF-2 subfamily.

The protein localises to the cytoplasm. Functionally, one of the essential components for the initiation of protein synthesis. Protects formylmethionyl-tRNA from spontaneous hydrolysis and promotes its binding to the 30S ribosomal subunits. Also involved in the hydrolysis of GTP during the formation of the 70S ribosomal complex. In Streptococcus pneumoniae (strain ATCC 700669 / Spain 23F-1), this protein is Translation initiation factor IF-2.